The sequence spans 313 residues: Metal ABC transporter substrate-binding lipoprotein (313 aa).

The signal sequence occupies residues 1-23; that stretch reads MIEKYKNILITFIALAAIVFLVG. C24 carries N-palmitoyl cysteine lipidation. C24 is lipidated: S-diacylglycerol cysteine. Residues H71, H143, E209, and D284 each contribute to the Zn(2+) site.

Belongs to the bacterial solute-binding protein 9 family. Lipoprotein receptor antigen (Lrai) subfamily.

It localises to the cell membrane. Functionally, part of an ATP-driven transport system for a metal; probably for manganese. In Lactococcus lactis subsp. lactis (strain IL1403) (Streptococcus lactis), this protein is Metal ABC transporter substrate-binding lipoprotein (mtsA).